A 338-amino-acid chain; its full sequence is Heat-inducible transcription repressor HrcA (338 aa).

The protein belongs to the HrcA family.

Functionally, negative regulator of class I heat shock genes (grpE-dnaK-dnaJ and groELS operons). Prevents heat-shock induction of these operons. The polypeptide is Heat-inducible transcription repressor HrcA (Bacillus thuringiensis (strain Al Hakam)).